Here is a 318-residue protein sequence, read N- to C-terminus: Biotin synthase (318 aa).

In terms of domain architecture, Radical SAM core spans H36 to D258. Residues C54, C58, and C61 each coordinate [4Fe-4S] cluster. [2Fe-2S] cluster contacts are provided by C98, C130, C190, and R262.

Belongs to the radical SAM superfamily. Biotin synthase family. In terms of assembly, homodimer. [4Fe-4S] cluster serves as cofactor. The cofactor is [2Fe-2S] cluster.

The enzyme catalyses (4R,5S)-dethiobiotin + (sulfur carrier)-SH + 2 reduced [2Fe-2S]-[ferredoxin] + 2 S-adenosyl-L-methionine = (sulfur carrier)-H + biotin + 2 5'-deoxyadenosine + 2 L-methionine + 2 oxidized [2Fe-2S]-[ferredoxin]. The protein operates within cofactor biosynthesis; biotin biosynthesis; biotin from 7,8-diaminononanoate: step 2/2. In terms of biological role, catalyzes the conversion of dethiobiotin (DTB) to biotin by the insertion of a sulfur atom into dethiobiotin via a radical-based mechanism. In Gloeobacter violaceus (strain ATCC 29082 / PCC 7421), this protein is Biotin synthase.